A 351-amino-acid chain; its full sequence is Protein-glutamate methylesterase/protein-glutamine glutaminase 2 (351 aa).

The Response regulatory domain occupies 4–121 (KVLVVDDSTL…PQGFNEYQDL (118 aa)). Residue Asp-55 is modified to 4-aspartylphosphate. Positions 156–348 (RTVNTQLVAI…DKLLQYLASV (193 aa)) constitute a CheB-type methylesterase domain. Active-site residues include Ser-168, His-194, and Asp-290.

The protein belongs to the CheB family. In terms of processing, phosphorylated by CheA. Phosphorylation of the N-terminal regulatory domain activates the methylesterase activity.

It localises to the cytoplasm. It carries out the reaction [protein]-L-glutamate 5-O-methyl ester + H2O = L-glutamyl-[protein] + methanol + H(+). The catalysed reaction is L-glutaminyl-[protein] + H2O = L-glutamyl-[protein] + NH4(+). Functionally, involved in chemotaxis. Part of a chemotaxis signal transduction system that modulates chemotaxis in response to various stimuli. Catalyzes the demethylation of specific methylglutamate residues introduced into the chemoreceptors (methyl-accepting chemotaxis proteins or MCP) by CheR. Also mediates the irreversible deamidation of specific glutamine residues to glutamic acid. This Shewanella oneidensis (strain ATCC 700550 / JCM 31522 / CIP 106686 / LMG 19005 / NCIMB 14063 / MR-1) protein is Protein-glutamate methylesterase/protein-glutamine glutaminase 2.